The sequence spans 274 residues: Elongation factor Ts (274 aa).

Positions 82–85 are involved in Mg(2+) ion dislocation from EF-Tu; the sequence is TDFV.

It belongs to the EF-Ts family.

The protein localises to the cytoplasm. Associates with the EF-Tu.GDP complex and induces the exchange of GDP to GTP. It remains bound to the aminoacyl-tRNA.EF-Tu.GTP complex up to the GTP hydrolysis stage on the ribosome. In Christiangramia forsetii (strain DSM 17595 / CGMCC 1.15422 / KT0803) (Gramella forsetii), this protein is Elongation factor Ts.